Here is a 445-residue protein sequence, read N- to C-terminus: C4-dicarboxylate transport protein (445 aa).

The next 8 membrane-spanning stretches (helical) occupy residues 24–44, 62–82, 105–125, 163–183, 201–221, 237–257, 322–342, and 370–390; these read VLYI…WLSP, LIKM…IAHI, FALI…GLAA, GDIL…MALG, FGVI…AMAF, LVAL…GVIA, IYMT…LSFS, and AGTL…VFSI.

The protein belongs to the dicarboxylate/amino acid:cation symporter (DAACS) (TC 2.A.23) family.

It is found in the cell inner membrane. In terms of biological role, responsible for the transport of dicarboxylates such as succinate, fumarate, and malate from the periplasm across the membrane. This Rhodopseudomonas palustris (strain HaA2) protein is C4-dicarboxylate transport protein.